We begin with the raw amino-acid sequence, 55 residues long: MSRGVSVEGDLEKALKKFKRISNETKKDSKRHEYYLSPRIRRKEKIKEANKYRSF.

Belongs to the bacterial ribosomal protein bS21 family.

The polypeptide is Small ribosomal subunit protein bS21 (Ureaplasma parvum serovar 3 (strain ATCC 27815 / 27 / NCTC 11736)).